The sequence spans 554 residues: Terpene synthase 17 (554 aa).

Mg(2+) is bound by residues Asp-306, Asp-310, and Glu-458. Residues 306 to 310 carry the DDXXD motif motif; the sequence is DDTYD.

This sequence belongs to the terpene synthase family. Tpsa subfamily. Requires Mg(2+) as cofactor. It depends on Mn(2+) as a cofactor. Mostly expressed in stem and trichomes, to a lower extent in leaves, flowers and roots and, at low levels, in fruits.

It carries out the reaction (2Z,6Z)-farnesyl diphosphate = beta-bisabolene + diphosphate. The catalysed reaction is (2E,6E)-farnesyl diphosphate = (+)-valencene + diphosphate. The enzyme catalyses (2E,6E)-farnesyl diphosphate = (E)-beta-farnesene + diphosphate. It catalyses the reaction (2E,6E)-farnesyl diphosphate = gamma-gurjunene + diphosphate. It carries out the reaction (2Z,6Z)-farnesyl diphosphate = (E)-gamma-bisabolene + diphosphate. The catalysed reaction is (2E)-geranyl diphosphate = limonene + diphosphate. The enzyme catalyses (2E)-geranyl diphosphate = beta-myrcene + diphosphate. It catalyses the reaction (2E)-geranyl diphosphate = (E)-beta-ocimene + diphosphate. It carries out the reaction (2E)-geranyl diphosphate = terpinolene + diphosphate. The catalysed reaction is (2E)-geranyl diphosphate = gamma-terpinene + diphosphate. The enzyme catalyses (2Z,6Z)-farnesyl diphosphate = (Z)-gamma-bisabolene + diphosphate. It catalyses the reaction (2E,6E)-farnesyl diphosphate = (1S,5S,6R)-alpha-bergamotene + diphosphate. It carries out the reaction (2Z,6Z)-farnesyl diphosphate = (1S,5S,6S)-alpha-bergamotene + diphosphate. The protein operates within secondary metabolite biosynthesis; terpenoid biosynthesis. Its function is as follows. Sesquiterpene synthase involved in the biosynthesis of volatile compounds. Mediates the conversion of (2E,6E)-farnesyl diphosphate (FPP) into gamma-gurjunene, (E)-beta-farnesene and (+)-valencene, and of (2Z,6Z)-farnesyl diphosphate ((ZZ)-FPP) into (E)-alpha-bergamotene and (Z)-gamma-bisabolene as well as beta-bisabolene, (Z)-alpha-bergamotene and (E)-gamma-bisabolene to a lower extent. Can act with a low efficiency as a monoterpene synthase with geranyl diphosphate (GPP) as substrate, thus producing beta-myrcene, (E)-beta-ocimene, limonene, terpinolene, gamma-terpinene and (Z)-beta-ocimene. This is Terpene synthase 17 from Solanum lycopersicum (Tomato).